The sequence spans 598 residues: Glutamine--fructose-6-phosphate aminotransferase [isomerizing] (598 aa).

The Nucleophile; for GATase activity role is filled by Cys-2. A Glutamine amidotransferase type-2 domain is found at 2–219; sequence CGIIGYIGPR…DGEYGIVSKD (218 aa). SIS domains lie at 280 to 420 and 449 to 588; these read VAEL…LVGI and IAVK…PDRP. Lys-593 acts as the For Fru-6P isomerization activity in catalysis.

As to quaternary structure, homodimer.

It is found in the cytoplasm. It catalyses the reaction D-fructose 6-phosphate + L-glutamine = D-glucosamine 6-phosphate + L-glutamate. Functionally, catalyzes the first step in hexosamine metabolism, converting fructose-6P into glucosamine-6P using glutamine as a nitrogen source. This chain is Glutamine--fructose-6-phosphate aminotransferase [isomerizing], found in Pyrococcus horikoshii (strain ATCC 700860 / DSM 12428 / JCM 9974 / NBRC 100139 / OT-3).